The primary structure comprises 352 residues: Molybdenum import ATP-binding protein ModC (352 aa).

Positions 1-229 (MLELNFSQTL…SVMNPWLPKE (229 aa)) constitute an ABC transporter domain. 31–38 (GVSGAGKT) lines the ATP pocket. A Mop domain is found at 289–352 (QTSIRNVLRA…AQIKSVSITA (64 aa)).

Belongs to the ABC transporter superfamily. Molybdate importer (TC 3.A.1.8) family. The complex is composed of two ATP-binding proteins (ModC), two transmembrane proteins (ModB) and a solute-binding protein (ModA).

Its subcellular location is the cell inner membrane. It catalyses the reaction molybdate(out) + ATP + H2O = molybdate(in) + ADP + phosphate + H(+). Part of the ABC transporter complex ModABC involved in molybdenum import. Responsible for energy coupling to the transport system. The polypeptide is Molybdenum import ATP-binding protein ModC (Shigella dysenteriae serotype 1 (strain Sd197)).